The sequence spans 334 residues: tRNA N6-adenosine threonylcarbamoyltransferase (334 aa).

Fe cation contacts are provided by histidine 112 and histidine 116. Substrate contacts are provided by residues valine 135 to glycine 139, aspartate 168, glycine 181, aspartate 185, and asparagine 274. Aspartate 303 is a Fe cation binding site.

Belongs to the KAE1 / TsaD family. The cofactor is Fe(2+).

It is found in the cytoplasm. The catalysed reaction is L-threonylcarbamoyladenylate + adenosine(37) in tRNA = N(6)-L-threonylcarbamoyladenosine(37) in tRNA + AMP + H(+). Its function is as follows. Required for the formation of a threonylcarbamoyl group on adenosine at position 37 (t(6)A37) in tRNAs that read codons beginning with adenine. Is involved in the transfer of the threonylcarbamoyl moiety of threonylcarbamoyl-AMP (TC-AMP) to the N6 group of A37, together with TsaE and TsaB. TsaD likely plays a direct catalytic role in this reaction. In Anaeromyxobacter dehalogenans (strain 2CP-1 / ATCC BAA-258), this protein is tRNA N6-adenosine threonylcarbamoyltransferase.